The primary structure comprises 340 residues: Phosphate acyltransferase (340 aa).

The tract at residues 285–340 (WRQSGRPARHRGQEPRRHRQPRFWLCHRRGRRRSPRQRNRTHPGTGQPPAGCAGAR) is disordered. Residues 300–325 (RRHRQPRFWLCHRRGRRRSPRQRNRT) are compositionally biased toward basic residues.

Belongs to the PlsX family. Homodimer. Probably interacts with PlsY.

It is found in the cytoplasm. It carries out the reaction a fatty acyl-[ACP] + phosphate = an acyl phosphate + holo-[ACP]. It functions in the pathway lipid metabolism; phospholipid metabolism. Its function is as follows. Catalyzes the reversible formation of acyl-phosphate (acyl-PO(4)) from acyl-[acyl-carrier-protein] (acyl-ACP). This enzyme utilizes acyl-ACP as fatty acyl donor, but not acyl-CoA. The polypeptide is Phosphate acyltransferase (Laribacter hongkongensis (strain HLHK9)).